Here is a 354-residue protein sequence, read N- to C-terminus: MHLELNERRRRVLKAVIQQYIDTATPVASQDLARSLGVSSATVRNEMAALEDAGLLTHLHTSAGRLPTDAGYRFFVENLMDRAALSTQEQRMIQHQFYQIRSELNQWIHLAAAVLARTAQTAAVVTPPRAYESRFKHIELISINDALVLLVLVLHEGSVKQQTLPADPNTTQEQLSRIAGRINELCHEASAKAIANIAHNQSTNQPPLSSFEVLVIESVARAMQQFEEHVNELIHHDGLLEMLHQPEFGQVTRVREVLSILEGGTMLESLIPQALASDGVQVIIGGEHSRDELRDYSVILSRYGVNGDVAGVVGVLGPRRMAYPRSISSVRYIAGVMSDLMGDLYGERKIEPSE.

It belongs to the HrcA family.

Its function is as follows. Negative regulator of class I heat shock genes (grpE-dnaK-dnaJ and groELS operons). Prevents heat-shock induction of these operons. The protein is Heat-inducible transcription repressor HrcA of Herpetosiphon aurantiacus (strain ATCC 23779 / DSM 785 / 114-95).